A 729-amino-acid chain; its full sequence is MDAFKLLTRSTKFKAGNSLSSTLPSKGKAENPQLFRDAEAEKLLESNAFGKKRKRTQAAGDSDAEDGNAGDLDFFGSGKRSAASAPSKKDEDGPSEQKDASDSEGDDSMDEVERRTILNSHKIKVTDMRDFEELQPTQPQKEESKKKKKKRKQQEEEPAQTLTKKEQKKARRLFPEPLVSFKQLRTKYNISRRLAENIAEQGFTVPTEVQLGSLPLLLGDQSVPQKSGTEKSTEPDLLVVAPTGSGKTLSFMIPVINKIVRHHHEKPEERGILSVVIAPTKELASQIVNEGRKLALGTGVKITLMKKGMRVVERDDEDDSKDVLDEDDSESLGSEDDEKATAKNSKGKAPVTKSDILVTTPLLLVNALSANRTKPLATLPLVRNVVLDEADVLLDPLFRDQTLDIWRSCTHPELRASLWSATMGSNVEDLAKSTIKERKDTLSETKSYPLLRLVVGLKDSAIPNIKHKLVYAATEQGKLLGLRQLLHPAAASSTDIRLRPPFLIFTQTIPRAVALHSELRYDIPPEAGGSSRIAVLHSELSDGQRSEIMKQFRKGEIWILVTTDLLARGVDFRGINGVVNYDIPNSAAVYVHRVGRTGRAGREGGIAVTYYTKEDIPYVKSIANVIDVSEKLRGTDEEKSVQKWLLDALPDLSKKKKEELKKHGVKARQTQGTKDDKKTRISTKSGYERRQENKKKALISASRNRKSQPKSGADSGSDDDNQGWQGLED.

2 disordered regions span residues 15-34 (AGNS…NPQL) and 45-171 (ESNA…KKAR). Basic and acidic residues predominate over residues 87–101 (SKKDEDGPSEQKDAS). The Q motif motif lies at 183-211 (QLRTKYNISRRLAENIAEQGFTVPTEVQL). A Helicase ATP-binding domain is found at 228-441 (GTEKSTEPDL…KSTIKERKDT (214 aa)). 241 to 248 (APTGSGKT) lines the ATP pocket. The disordered stretch occupies residues 313–350 (ERDDEDDSKDVLDEDDSESLGSEDDEKATAKNSKGKAP). The span at 314–338 (RDDEDDSKDVLDEDDSESLGSEDDE) shows a compositional bias: acidic residues. The DEAD box motif lies at 388 to 391 (DEAD). Residues 481-649 (GLRQLLHPAA…SVQKWLLDAL (169 aa)) enclose the Helicase C-terminal domain. Positions 657–729 (KEELKKHGVK…DNQGWQGLED (73 aa)) are disordered. The span at 686 to 695 (GYERRQENKK) shows a compositional bias: basic and acidic residues. The segment covering 696–708 (KALISASRNRKSQ) has biased composition (basic residues). Residues 716–729 (GSDDDNQGWQGLED) are compositionally biased toward acidic residues.

It belongs to the DEAD box helicase family. DDX52/ROK1 subfamily. As to quaternary structure, interacts with the U3 snoRNA and is associated with the 90S and 40S pre-ribosomes.

The protein localises to the nucleus. It localises to the nucleolus. The enzyme catalyses ATP + H2O = ADP + phosphate + H(+). Its function is as follows. ATP-dependent RNA helicase involved in 40S ribosomal subunit biogenesis. Required for the processing and cleavage of 35S pre-rRNA at sites A0, A1, and A2, leading to mature 18S rRNA. This chain is ATP-dependent RNA helicase rok1 (rok1), found in Aspergillus niger (strain ATCC MYA-4892 / CBS 513.88 / FGSC A1513).